Consider the following 211-residue polypeptide: tRNA (guanine-N(7)-)-methyltransferase (211 aa).

S-adenosyl-L-methionine is bound by residues E43, E68, D95, and D117. The active site involves D117. Residues K121, D153, and 190 to 193 each bind substrate; that span reads TEYE.

Belongs to the class I-like SAM-binding methyltransferase superfamily. TrmB family.

It carries out the reaction guanosine(46) in tRNA + S-adenosyl-L-methionine = N(7)-methylguanosine(46) in tRNA + S-adenosyl-L-homocysteine. It participates in tRNA modification; N(7)-methylguanine-tRNA biosynthesis. Its function is as follows. Catalyzes the formation of N(7)-methylguanine at position 46 (m7G46) in tRNA. This is tRNA (guanine-N(7)-)-methyltransferase from Staphylococcus saprophyticus subsp. saprophyticus (strain ATCC 15305 / DSM 20229 / NCIMB 8711 / NCTC 7292 / S-41).